A 2514-amino-acid chain; its full sequence is Highly reducing polyketide synthase sphB (2514 aa).

Positions 66 to 486 (QVPIAICGMA…GANAHVILES (421 aa)) constitute a Ketosynthase family 3 (KS3) domain. Active-site for beta-ketoacyl synthase activity residues include C238, H374, and H409. The Malonyl-CoA:ACP transacylase (MAT) domain maps to 580–904 (MVFTGQGAQW…AIGALHSLNV (325 aa)). The N-terminal hotdog fold stretch occupies residues 950-1079 (HDLLGARVAE…GEVCAQSSAP (130 aa)). In terms of domain architecture, PKS/mFAS DH spans 950–1240 (HDLLGARVAE…AADISDTHAA (291 aa)). Catalysis depends on H982, which acts as the Proton acceptor; for dehydratase activity. The interval 1089 to 1240 (PRTLNVRKWY…AADISDTHAA (152 aa)) is C-terminal hotdog fold. The Proton donor; for dehydratase activity role is filled by D1150. Positions 1319–1578 (WTGLDHEAIS…EPHQVTTTMV (260 aa)) are methyltransferase (CMet) domain. Residues 1779-2092 (GRVNSLHYAR…KGQHIGRVGV (314 aa)) enclose the Enoyl reductase (ER) domain. The Ketoreductase (KR) domain maps to 2120–2297 (ASYLMVGGLG…ASVVDMGAVE (178 aa)). The 78-residue stretch at 2427–2504 (EAAKLFAVEI…ILGQYAANEV (78 aa)) folds into the Carrier domain. S2464 is subject to O-(pantetheine 4'-phosphoryl)serine.

Pantetheine 4'-phosphate is required as a cofactor.

The catalysed reaction is holo-[ACP] + 8 malonyl-CoA + acetyl-CoA + 5 AH2 + 8 NADPH + 16 H(+) = (3R)-hydroxyoctadeca-4,10-dienoyl-[ACP] + 5 A + 8 CO2 + 8 NADP(+) + 9 CoA + 7 H2O. The protein operates within secondary metabolite biosynthesis. Its function is as follows. Highly reducing polyketide synthase; part of the gene cluster that mediates the biosynthesis of sphingofungins, bioactive molecules acting as sphingolipid inhibitors via inhibiting serine palmitoyl transferase (SPT). Within the pathway, sphB catalyzes the first step of sphingofungin biosynthesis by condensing 8 units of malonyl-CoA with one starter unit of acetyl-CoA, leading to an C18 polyketide precursor 3-hydroxyoctadeca-4,10-dienoyl-ACP containing one delta-6 desaturation and one delta-12 desaturation. The PKS sphB does not contain any putative thioesterase domain for releasing the nascent polyketide chain and it has been suggested that aminoacyl transferases can facilitate the polyketide chain release. The aminoacyl transferase sphA uses the sphB product to produce 3-keto-presphingofungin by adding an aminomalonate molecule. SphF then reduces the C-3 ketone of 3-keto-presphingofungin which leads to presphingofungin. The cytochrome P450 monooxygenase sphH converts presphingofungin into sphingofungin B1 which is further converted to sphingofungin B by the dioxygenase sphC. SphC is also able to convert presphingofungin into sphingofungin B2. The acetyltransferase sphE acetylates sphingofungin B to produce sphingofungin C, but can also convert sphingofungin B1 into sphingofungin C1 and sphingofungin B2 into sphingofungin C2. Finally, sphingofungin C can be spontaneously converted into sphingofungin D. This is Highly reducing polyketide synthase sphB from Aspergillus fumigatus (strain CBS 144.89 / FGSC A1163 / CEA10) (Neosartorya fumigata).